We begin with the raw amino-acid sequence, 106 residues long: uncharacterized protein (106 aa).

Positions 28-68 (SSANEPKKLPNKKLVSTKSHTQVNREKSKNKDTYEDYSDSN) are disordered. Residues 50–61 (VNREKSKNKDTY) are compositionally biased toward basic and acidic residues.

This is an uncharacterized protein from Acanthamoeba polyphaga (Amoeba).